A 238-amino-acid chain; its full sequence is Small ribosomal subunit protein eS4 (238 aa).

The S4 RNA-binding domain occupies 38-101; it reads LPLALIIRDV…GEVYRVVPDA (64 aa).

Belongs to the eukaryotic ribosomal protein eS4 family.

In Pyrobaculum aerophilum (strain ATCC 51768 / DSM 7523 / JCM 9630 / CIP 104966 / NBRC 100827 / IM2), this protein is Small ribosomal subunit protein eS4.